Consider the following 468-residue polypeptide: Probable citrate synthase, mitochondrial (468 aa).

Residues His-303, His-349, and Asp-404 contribute to the active site.

It belongs to the citrate synthase family. Homodimer.

Its subcellular location is the mitochondrion matrix. The enzyme catalyses oxaloacetate + acetyl-CoA + H2O = citrate + CoA + H(+). Its pathway is carbohydrate metabolism; tricarboxylic acid cycle; isocitrate from oxaloacetate: step 1/2. The sequence is that of Probable citrate synthase, mitochondrial (cts-1) from Caenorhabditis elegans.